Consider the following 468-residue polypeptide: ATP synthase subunit beta (468 aa).

155–162 (GGAGVGKT) is a binding site for ATP.

The protein belongs to the ATPase alpha/beta chains family. In terms of assembly, F-type ATPases have 2 components, CF(1) - the catalytic core - and CF(0) - the membrane proton channel. CF(1) has five subunits: alpha(3), beta(3), gamma(1), delta(1), epsilon(1). CF(0) has three main subunits: a(1), b(2) and c(9-12). The alpha and beta chains form an alternating ring which encloses part of the gamma chain. CF(1) is attached to CF(0) by a central stalk formed by the gamma and epsilon chains, while a peripheral stalk is formed by the delta and b chains.

It localises to the cell membrane. It carries out the reaction ATP + H2O + 4 H(+)(in) = ADP + phosphate + 5 H(+)(out). Its function is as follows. Produces ATP from ADP in the presence of a proton gradient across the membrane. The catalytic sites are hosted primarily by the beta subunits. This chain is ATP synthase subunit beta, found in Streptococcus agalactiae serotype Ia (strain ATCC 27591 / A909 / CDC SS700).